Reading from the N-terminus, the 770-residue chain is Protein PAT1 homolog 1 (770 aa).

The disordered stretch occupies residues 1-42 (MFRYESLEDCPLDEDEDAFQGLGEEDEEIDQFNDDTFGSGAV). The segment at 1 to 84 (MFRYESLEDC…EMDLLGDHEE (84 aa)) is region A; interaction with DDX6/RCK. The segment at 1 to 397 (MFRYESLEDC…HQSSHQDHLR (397 aa)) is involved in nuclear foci localization. Over residues 7 to 33 (LEDCPLDEDEDAFQGLGEEDEEIDQFN) the composition is skewed to acidic residues. Residues 85-388 (NLAERLSKMV…LNGTGDRGGH (304 aa)) are region N; interaction with decapping machinery. Positions 86-95 (LAERLSKMVI) match the Nuclear export signal motif. The disordered stretch occupies residues 155–195 (PQRPLQGPEDDRDLSERALPRRSTSPIIGSPPVRAVPIGTP). Phosphoserine is present on Ser177. At Thr178 the chain carries Phosphothreonine. 2 positions are modified to phosphoserine: Ser179 and Ser184. Thr194 is subject to Phosphothreonine. Arg217, Arg223, and Arg263 each carry asymmetric dimethylarginine. Residues 223-397 (RYPAPYGERI…HQSSHQDHLR (175 aa)) form an involved in RNA-binding region. A Phosphoserine modification is found at Ser278. Asymmetric dimethylarginine is present on Arg284. Disordered regions lie at residues 319 to 340 (FSAPPPATPPPQQHPPGPGPHL) and 376 to 396 (HRNLNGTGDRGGHQSSHQDHL). A compositionally biased stretch (pro residues) spans 321–337 (APPPATPPPQQHPPGPG). Residue Arg385 is modified to Omega-N-methylarginine. The span at 385 to 396 (RGGHQSSHQDHL) shows a compositional bias: basic and acidic residues. The region H stretch occupies residues 389 to 448 (QSSHQDHLRKDPYANLMLQREKDWVSKIQMMQLQSTDPYLDDFYYQNYFEKLEKLSAAEE). The tract at residues 398 to 770 (KDPYANLMLQ…TKLQLVQGIR (373 aa)) is involved in nuclear speckle localization. The interval 449–770 (IQGDGPKKER…TKLQLVQGIR (322 aa)) is region C.

The protein belongs to the PAT1 family. Interacts (via region A) with DDX6/RCK. Interacts (via region H and region C) with LSM1 and LSM4. Interacts (via region N) with DCP1A, DCP2, EDC3, EDC4 and XRN1. Interacts with the CCR4-NOT complex. Interacts with the Lsm-containing SMN-Sm protein complex. Interacts with EIF4ENIF1/4E-T.

It localises to the cytoplasm. Its subcellular location is the P-body. It is found in the nucleus. The protein resides in the PML body. The protein localises to the nucleus speckle. RNA-binding protein involved in deadenylation-dependent decapping of mRNAs, leading to the degradation of mRNAs. Acts as a scaffold protein that connects deadenylation and decapping machinery. Required for cytoplasmic mRNA processing body (P-body) assembly. The chain is Protein PAT1 homolog 1 (Patl1) from Mus musculus (Mouse).